A 409-amino-acid polypeptide reads, in one-letter code: Serine/threonine transporter SstT (409 aa).

Helical transmembrane passes span 15–35 (LSLV…ALLA), 49–69 (FVSA…MASI), 82–102 (PILV…VIAS), 142–162 (ALMN…GVAI), 193–213 (LGIF…ALLG), 218–238 (LAVL…LIVF), 301–321 (GAAI…GIAV), 331–351 (VVAA…LLLI), and 357–377 (LFGI…IIGV).

Belongs to the dicarboxylate/amino acid:cation symporter (DAACS) (TC 2.A.23) family.

It localises to the cell inner membrane. The catalysed reaction is L-serine(in) + Na(+)(in) = L-serine(out) + Na(+)(out). It catalyses the reaction L-threonine(in) + Na(+)(in) = L-threonine(out) + Na(+)(out). Involved in the import of serine and threonine into the cell, with the concomitant import of sodium (symport system). In Pseudomonas fluorescens (strain ATCC BAA-477 / NRRL B-23932 / Pf-5), this protein is Serine/threonine transporter SstT.